The chain runs to 190 residues: MAIILGIDPGSRVTGYGVIRQAGRHLEYLGSGVIRTSVTDLPTRLKRIYMGVNEIILQYQPDMFAIEEVFLAKNANSALKLGQARGAAIVAAVNHDLPVFEYAARLVKQTVVGIGSADKIQVQDMVTRILTLSEKPQADAADALAIAITHAHSLQHAFHVTNSAQATEKPEKTTALLKARYSRGRFRLKI.

Active-site residues include Asp8, Glu67, and Asp139. 3 residues coordinate Mg(2+): Asp8, Glu67, and Asp139.

Belongs to the RuvC family. In terms of assembly, homodimer which binds Holliday junction (HJ) DNA. The HJ becomes 2-fold symmetrical on binding to RuvC with unstacked arms; it has a different conformation from HJ DNA in complex with RuvA. In the full resolvosome a probable DNA-RuvA(4)-RuvB(12)-RuvC(2) complex forms which resolves the HJ. Mg(2+) is required as a cofactor.

It is found in the cytoplasm. It carries out the reaction Endonucleolytic cleavage at a junction such as a reciprocal single-stranded crossover between two homologous DNA duplexes (Holliday junction).. Functionally, the RuvA-RuvB-RuvC complex processes Holliday junction (HJ) DNA during genetic recombination and DNA repair. Endonuclease that resolves HJ intermediates. Cleaves cruciform DNA by making single-stranded nicks across the HJ at symmetrical positions within the homologous arms, yielding a 5'-phosphate and a 3'-hydroxyl group; requires a central core of homology in the junction. The consensus cleavage sequence is 5'-(A/T)TT(C/G)-3'. Cleavage occurs on the 3'-side of the TT dinucleotide at the point of strand exchange. HJ branch migration catalyzed by RuvA-RuvB allows RuvC to scan DNA until it finds its consensus sequence, where it cleaves and resolves the cruciform DNA. This chain is Crossover junction endodeoxyribonuclease RuvC, found in Pasteurella multocida (strain Pm70).